Consider the following 131-residue polypeptide: Small ribosomal subunit protein uS8 (131 aa).

It belongs to the universal ribosomal protein uS8 family. In terms of assembly, part of the 30S ribosomal subunit. Contacts proteins S5 and S12.

One of the primary rRNA binding proteins, it binds directly to 16S rRNA central domain where it helps coordinate assembly of the platform of the 30S subunit. In Verminephrobacter eiseniae (strain EF01-2), this protein is Small ribosomal subunit protein uS8.